A 224-amino-acid polypeptide reads, in one-letter code: Biosynthetic peptidoglycan transglycosylase (224 aa).

A helical membrane pass occupies residues 12–32 (ILVVLAILPVFLLLVYSLPFV).

Belongs to the glycosyltransferase 51 family.

It localises to the cell inner membrane. The catalysed reaction is [GlcNAc-(1-&gt;4)-Mur2Ac(oyl-L-Ala-gamma-D-Glu-L-Lys-D-Ala-D-Ala)](n)-di-trans,octa-cis-undecaprenyl diphosphate + beta-D-GlcNAc-(1-&gt;4)-Mur2Ac(oyl-L-Ala-gamma-D-Glu-L-Lys-D-Ala-D-Ala)-di-trans,octa-cis-undecaprenyl diphosphate = [GlcNAc-(1-&gt;4)-Mur2Ac(oyl-L-Ala-gamma-D-Glu-L-Lys-D-Ala-D-Ala)](n+1)-di-trans,octa-cis-undecaprenyl diphosphate + di-trans,octa-cis-undecaprenyl diphosphate + H(+). Its pathway is cell wall biogenesis; peptidoglycan biosynthesis. In terms of biological role, peptidoglycan polymerase that catalyzes glycan chain elongation from lipid-linked precursors. The polypeptide is Biosynthetic peptidoglycan transglycosylase (Brucella suis biovar 1 (strain 1330)).